The following is a 794-amino-acid chain: Kinesin-like protein KIN-13A (794 aa).

The Kinesin motor domain occupies 193-526 (KIKVVVRKRP…LRYADRVKSL (334 aa)). An ATP-binding site is contributed by 282–289 (GQTGSGKT). Residues 525-699 (SLSKSGNSKK…YETASRQYET (175 aa)) form a disordered region. Over residues 569–579 (ETRRRVVEKDS) the composition is skewed to basic and acidic residues. 2 stretches are compositionally biased toward polar residues: residues 580–593 (NSSTSGIDFRQPTN) and 611–632 (EPNSSFAGSTSQRNNISSYPQE). Basic and acidic residues predominate over residues 650 to 668 (GLREEKPDRPQNWSKRDVS). Residues 669–696 (SSDIPTLTNFRQNASETASRQYETASRQ) are compositionally biased toward polar residues. Residues 705–742 (ENLDALLEEEEALIAAHRKEIEDTMEIVREEMKLLAEV) are a coiled coil.

Belongs to the TRAFAC class myosin-kinesin ATPase superfamily. Kinesin family. KIN-13 subfamily. As to quaternary structure, component of the active ARAC10-IRC5-KIN13A complex. Interacts (via-C-terminus) with ICR2 and ICR5 (via N-terminus). No interactions with ICR1. Expressed in leaves, roots, young and mature seedlings. Preferentially expressed in the secondary cell wall pits of differentiating metaxylem vessel cells (at the protein level).

It is found in the golgi apparatus. The protein resides in the golgi stack. It localises to the cytoplasm. Its subcellular location is the cytoskeleton. In terms of biological role, internal motor kinesin involved in trichome morphogenesis. Participates in regulating the formation of Golgi-associated vesicles. Plays a central role in microtubule disassembly via the active ARAC10-ICR5 cascade, which establishes the secondary cell wall pattern in metaxylem vessel cells. Acts redundantly with KIN13B to modulate cell wall synthesis and cell expansion via the THE1 pathway. This Arabidopsis thaliana (Mouse-ear cress) protein is Kinesin-like protein KIN-13A.